We begin with the raw amino-acid sequence, 270 residues long: MTRQDLVLFRPRLALLNGIAAVAGHALVPDAAHATLWVALAGVAILAAGGSALNQVLERDLDRLMERTRQRPLPRGDLSPAMATALGCACIGTGLLVLAAGGPVPPLLGAVALAWYLAVYTPLKRRTSLALAIGAVSGALPPVIGWTLAGGAPGDYRIILLAGIFFLWQVPHFWLFQRRHADDYRRAGIPLFTPGAGRLGPSFHVRLWLGALAASVLLLPAFGLMAPRMAPWIAAVPLLLLPVCRPRSEATLFSCLNAFPPLMALALLLR.

7 helical membrane-spanning segments follow: residues 13-30 (LALL…LVPD), 33-53 (HATL…GSAL), 95-115 (LLVL…ALAW), 129-149 (LALA…WTLA), 156-176 (YRII…FWLF), 207-227 (LWLG…LMAP), and 249-269 (EATL…ALLL).

This sequence belongs to the UbiA prenyltransferase family. Protoheme IX farnesyltransferase subfamily.

The protein resides in the cell inner membrane. The catalysed reaction is heme b + (2E,6E)-farnesyl diphosphate + H2O = Fe(II)-heme o + diphosphate. It functions in the pathway porphyrin-containing compound metabolism; heme O biosynthesis; heme O from protoheme: step 1/1. In terms of biological role, converts heme B (protoheme IX) to heme O by substitution of the vinyl group on carbon 2 of heme B porphyrin ring with a hydroxyethyl farnesyl side group. In Geobacter sulfurreducens (strain ATCC 51573 / DSM 12127 / PCA), this protein is Protoheme IX farnesyltransferase.